The following is a 554-amino-acid chain: Transcription factor 7-like 1-A (554 aa).

The span at Met-1–Glu-11 shows a compositional bias: gly residues. Positions Met-1–Ser-61 are interaction with CTNNB1-A. Disordered stretches follow at residues Met-1–Phe-73, Gly-183–Pro-213, and Trp-391–Lys-475. Basic and acidic residues-rich tracts occupy residues Glu-17–Pro-32 and Ser-52–Phe-73. An interaction with AES and TLE4-A region spans residues Leu-109–Met-312. A DNA-binding region (HMG box) is located at residues Ile-324–Ser-392. Over residues Lys-407–Thr-416 the composition is skewed to basic and acidic residues. An interaction with CTBP-B region spans residues Gln-408–Asp-554. Residues Ser-445–Ser-464 are compositionally biased toward low complexity. Residues Glu-465 to Thr-474 are compositionally biased toward polar residues.

It belongs to the TCF/LEF family. As to quaternary structure, interacts with csnk1e, ctnnb1-A, ctbp-B, dact1-A and gsk3b. May interact with ase and tle4-A. Phosphorylated. Phosphorylation by csnk1e promotes binding to ctnnb1-A while phosphorylation by gsk3b may reverse this effect.

It is found in the cytoplasm. Its subcellular location is the nucleus. Its function is as follows. Participates in the Wnt signaling pathway. Binds to DNA and acts as a repressor in the absence of ctnnb1-A and possibly ctnnb1-B, and as an activator in the presence of these proteins. Required early in development for the establishment of the dorsal body axis in response to maternal Wnt signaling. Also required during development of the CNS for the establishment of dorsal-ventral patterning in the prospective diencephalon. The sequence is that of Transcription factor 7-like 1-A (tcf7l1-a) from Xenopus laevis (African clawed frog).